The primary structure comprises 1101 residues: Protein diaphanous homolog 2 (1101 aa).

Met1 bears the N-acetylmethionine mark. The disordered stretch occupies residues 1 to 44 (MEQPGAAASGAGGGSEEPGGGRSNKRSAGNRAANEEETKNKPKL). Positions 10–22 (GAGGGSEEPGGGR) are enriched in gly residues. The region spanning 98-464 (SLNLSEKEVL…QIVLHCSGMD (367 aa)) is the GBD/FH3 domain. Coiled-coil stretches lie at residues 366–418 (KEKE…MLKD) and 487–547 (KAKV…SSSG). The span at 536–546 (RTQAQVLSSSS) shows a compositional bias: polar residues. Disordered stretches follow at residues 536-594 (RTQA…PPPP), 1010-1048 (NKRR…DINK), and 1070-1101 (RDRR…ISSK). The span at 549–594 (PGPPAAPPLPGVGPPPPPPAPPLPGGAPLPPPPPPLPGMMGIPPPP) shows a compositional bias: pro residues. Residues 549-623 (PGPPAAPPLP…PPPGISLNLP (75 aa)) enclose the FH1 domain. Positions 628–1028 (QKKMYKPEVS…TRRAKLAKEK (401 aa)) constitute an FH2 domain. Residues 903–1053 (SASKVSAQIL…IDINKEGDET (151 aa)) adopt a coiled-coil conformation. 2 stretches are compositionally biased toward basic and acidic residues: residues 1010–1035 (NKRR…EKLE) and 1078–1090 (RNPD…LERS). The region spanning 1051–1081 (DETGVMDNLLEALQSGAAFRDRRKRIPRNPD) is the DAD domain.

The protein belongs to the formin homology family. Diaphanous subfamily. Isoform 3 interacts with RHOD in the GTP-bound form. As to expression, expressed in testis, ovary, small intestine, prostate, lung, liver, kidney and leukocytes.

Its subcellular location is the cytoplasm. The protein resides in the cytosol. The protein localises to the early endosome. Functionally, could be involved in oogenesis. Involved in the regulation of endosome dynamics. Implicated in a novel signal transduction pathway, in which isoform 3 and CSK are sequentially activated by RHOD to regulate the motility of early endosomes through interactions with the actin cytoskeleton. This is Protein diaphanous homolog 2 (DIAPH2) from Homo sapiens (Human).